Consider the following 412-residue polypeptide: MNAEIIAVGTELLLGQIANTNAQFLSEKLASIGINVYYHTVVGDNNKRLQQAIEVAEERADMLIFTGGLGPTKDDLTKETIASSLEEKLVYDENALALISNYFKRTGREFTENNKKQALVLNGGTVFANDHGMAPGMGLNKNGKVYILLPGPPKEMKPMYVSYVEPFLRNFTTGENIYSRVLRFFGIGESQLEVKVQDLIDGQTNPTIAPLANDGEVTLRLTAKHQNVHEAEKLIQHVEDLILERVGEFFYGYDQEFLHYKAIELLKKKGLTLACAESLTGGLFGNQVTENAGVSSVFKGGVICYHNDVKQHVLHVPEEVLSTDGAVSKECARYLAENVRELLKADIGISFTGVAGPDASEHKEPGTVFVGLAIKDEPTVVFPLNLSGSRQQIRERSAKYGFYHLYKKLEEI.

The protein belongs to the CinA family.

This is Putative competence-damage inducible protein from Bacillus cereus (strain Q1).